The chain runs to 407 residues: Keratin, type I cuticular Ha2 (407 aa).

The head stretch occupies residues 1–55 (MPSVCMPTTYRPASCLSKTYLSSSCQPSNRRPTGCISSSMGTYGLFCEGAFNGNE). Residues 55-366 (EKETMQVLND…GLLESEDSKL (312 aa)) form the IF rod domain. The tract at residues 56–90 (KETMQVLNDRLANYLEKVRQLEKENAELEGKIQDV) is coil 1A. Residues 91 to 101 (YQGQVLTMCPD) form a linker 1 region. The interval 102-202 (YQSYFQTIEE…HEEEVGVLRQ (101 aa)) is coil 1B. The interval 203–218 (QLGDRLNIEVDAAPPV) is linker 12. Residues 219-362 (DLTRMLEEMR…DTYRGLLESE (144 aa)) are coil 2. The tail stretch occupies residues 363–407 (DSKLPCNPCSTPSCQPCAPSPGVSRTVCVPHTVCVPCSPCLQTRY).

It belongs to the intermediate filament family. As to expression, cuticle of the hair shaft.

This chain is Keratin, type I cuticular Ha2 (Krt32), found in Mus musculus (Mouse).